The following is a 142-amino-acid chain: HTH-type transcriptional repressor NsrR (142 aa).

Residues 2-129 (QLTSFTDYGL…DRHTLAELVE (128 aa)) enclose the HTH rrf2-type domain. Positions 28-51 (ITEVTQVYGVSRNHMVKIINQLSH) form a DNA-binding region, H-T-H motif. [2Fe-2S] cluster-binding residues include C91, C96, and C102.

[2Fe-2S] cluster serves as cofactor.

Nitric oxide-sensitive repressor of genes involved in protecting the cell against nitrosative stress. May require iron for activity. The chain is HTH-type transcriptional repressor NsrR from Proteus mirabilis (strain HI4320).